Reading from the N-terminus, the 106-residue chain is Urease subunit beta (106 aa).

The protein belongs to the urease beta subunit family. As to quaternary structure, heterotrimer of UreA (gamma), UreB (beta) and UreC (alpha) subunits. Three heterotrimers associate to form the active enzyme.

The protein resides in the cytoplasm. It carries out the reaction urea + 2 H2O + H(+) = hydrogencarbonate + 2 NH4(+). The protein operates within nitrogen metabolism; urea degradation; CO(2) and NH(3) from urea (urease route): step 1/1. The polypeptide is Urease subunit beta (Prochlorococcus marinus (strain NATL1A)).